Reading from the N-terminus, the 157-residue chain is Ribosome maturation factor RimP (157 aa).

The protein belongs to the RimP family.

The protein resides in the cytoplasm. In terms of biological role, required for maturation of 30S ribosomal subunits. The chain is Ribosome maturation factor RimP from Geobacillus sp. (strain WCH70).